Reading from the N-terminus, the 428-residue chain is Lipoamide acyltransferase component of branched-chain alpha-keto acid dehydrogenase complex (428 aa).

Residues 3-78 (THVIKMPDIG…AVGGELIRLE (76 aa)) enclose the Lipoyl-binding domain. An N6-lipoyllysine modification is found at K44. The interval 88–145 (SPAAATPAAPVAATPEKPKEAPVAAPKAAAEAPRALRDSEAPRQRRQPGERPLASPAV) is disordered. Positions 89-120 (PAAATPAAPVAATPEKPKEAPVAAPKAAAEAP) are enriched in low complexity. Positions 121 to 136 (RALRDSEAPRQRRQPG) are enriched in basic and acidic residues. The Peripheral subunit-binding (PSBD) domain occupies 140 to 177 (LASPAVRQRARDLGIELQFVQGSGPAGRVLHEDLDAYL). Residues H400 and D404 contribute to the active site.

It belongs to the 2-oxoacid dehydrogenase family. In terms of assembly, forms a 24-polypeptide structural core with octahedral symmetry. (R)-lipoate serves as cofactor.

The enzyme catalyses N(6)-[(R)-dihydrolipoyl]-L-lysyl-[protein] + 2-methylpropanoyl-CoA = N(6)-[(R)-S(8)-2-methylpropanoyldihydrolipoyl]-L-lysyl-[protein] + CoA. Functionally, the branched-chain alpha-keto dehydrogenase complex catalyzes the overall conversion of alpha-keto acids to acyl-CoA and CO(2). It contains multiple copies of three enzymatic components: branched-chain alpha-keto acid decarboxylase (E1), lipoamide acyltransferase (E2) and lipoamide dehydrogenase (E3). The protein is Lipoamide acyltransferase component of branched-chain alpha-keto acid dehydrogenase complex (bkdB) of Pseudomonas aeruginosa (strain ATCC 15692 / DSM 22644 / CIP 104116 / JCM 14847 / LMG 12228 / 1C / PRS 101 / PAO1).